The following is a 201-amino-acid chain: Putative manganese efflux pump MntP 2 (201 aa).

The next 6 membrane-spanning stretches (helical) occupy residues 3-23 (LISVILISIGLSMDAFAVSIT), 39-59 (IGLFFGGFQALMPLIGWSIGI), 65-85 (IAALDHWIALILLSIIGGKMI), 116-136 (LILLAIATSIDALAVGVSFAF), 141-161 (IINTIVIIGSITFVICFIGVM), and 176-196 (ILGGVVLILIGVKIFIQHTNI).

Belongs to the MntP (TC 9.B.29) family.

The protein resides in the cell membrane. Functionally, probably functions as a manganese efflux pump. This chain is Putative manganese efflux pump MntP 2, found in Clostridium botulinum (strain Langeland / NCTC 10281 / Type F).